Reading from the N-terminus, the 188-residue chain is Protein SYC1 (188 aa).

In terms of assembly, component of the cleavage and polyadenylation factor (CPF) complex, which is composed of at least PTI1, SYC1, SSU72, GLC7, MPE1, REF2, PFS2, PTA1, YSH1/BRR5, SWD2, CFT2/YDH1, YTH1, CFT1/YHH1, FIP1 and PAP1. Component of the APT complex, which is a subcomplex of CPF, and is composed of PTI1, SYC1, SSU72, GLC7, REF2, PTA1 and SWD2.

It is found in the nucleus. Functionally, component of the cleavage and polyadenylation factor (CPF) complex, which plays a key role in polyadenylation-dependent pre-mRNA 3'-end formation and cooperates with cleavage factors including the CFIA complex and NAB4/CFIB. Component of the APT complex, which may be involved in polyadenylation-independent transcript 3'-end formation, including snoRNAs and snRNAs. In Saccharomyces cerevisiae (strain ATCC 204508 / S288c) (Baker's yeast), this protein is Protein SYC1 (SYC1).